Here is a 262-residue protein sequence, read N- to C-terminus: Thiazole synthase (262 aa).

Lys-96 (schiff-base intermediate with DXP) is an active-site residue. 1-deoxy-D-xylulose 5-phosphate contacts are provided by residues Gly-157, 184-185, and 206-207; these read AG and NT.

This sequence belongs to the ThiG family. In terms of assembly, homotetramer. Forms heterodimers with either ThiH or ThiS.

Its subcellular location is the cytoplasm. It carries out the reaction [ThiS sulfur-carrier protein]-C-terminal-Gly-aminoethanethioate + 2-iminoacetate + 1-deoxy-D-xylulose 5-phosphate = [ThiS sulfur-carrier protein]-C-terminal Gly-Gly + 2-[(2R,5Z)-2-carboxy-4-methylthiazol-5(2H)-ylidene]ethyl phosphate + 2 H2O + H(+). The protein operates within cofactor biosynthesis; thiamine diphosphate biosynthesis. Functionally, catalyzes the rearrangement of 1-deoxy-D-xylulose 5-phosphate (DXP) to produce the thiazole phosphate moiety of thiamine. Sulfur is provided by the thiocarboxylate moiety of the carrier protein ThiS. In vitro, sulfur can be provided by H(2)S. This Legionella pneumophila (strain Corby) protein is Thiazole synthase.